The sequence spans 1142 residues: Serine/threonine-protein kinase GIN4 (1142 aa).

Residues 19 to 289 (WKLGETLGLG…TRDILKHPLL (271 aa)) form the Protein kinase domain. ATP-binding positions include 25–33 (LGLGSTGKV) and Lys-48. Asp-156 serves as the catalytic Proton acceptor. 2 disordered regions span residues 378–412 (KKRQSISSVSVSPSKKVSTTPQRRRNRESLISVTS) and 425–469 (ASSA…RNKR). Over residues 382–395 (SISSVSVSPSKKVS) the composition is skewed to low complexity. Position 406 is a phosphoserine (Ser-406). Residues 425-440 (ASSASSSNLTTPGSSK) show a composition bias toward low complexity. Positions 441-452 (RLSKNFSSKKKL) are enriched in basic residues. Residues 454–465 (TIVNQSSPTPAS) show a composition bias toward polar residues. Phosphoserine is present on residues Ser-465, Ser-471, Ser-617, Ser-689, Ser-719, Ser-805, Ser-807, and Ser-883. A disordered region spans residues 676-698 (DPGIMFSSPTEEVSPVEPKRTEN). Position 884 is a phosphothreonine (Thr-884). Positions 903 to 1031 (NEAKQTDNLH…NTAIGNGSFF (129 aa)) are disordered. 3 stretches are compositionally biased toward basic and acidic residues: residues 923 to 937 (NELRKQNSQEGDQAH), 962 to 984 (KEEKKPEQHKQEEDQEKREKVVD), and 996 to 1021 (KIREKNAGSQAKDHSKDHLKEHKQDK). Residue Ser-930 is modified to Phosphoserine.

The protein belongs to the protein kinase superfamily. CAMK Ser/Thr protein kinase family. NIM1 subfamily. As to quaternary structure, component of the GIN4 complex composed of at least BNI5, CDC3, CDC10, CDC11, CDC12, GIN4, NAP1 and SHS1 which forms a ring at the bud neck.

Its subcellular location is the cytoplasm. It localises to the bud neck. The enzyme catalyses L-seryl-[protein] + ATP = O-phospho-L-seryl-[protein] + ADP + H(+). It carries out the reaction L-threonyl-[protein] + ATP = O-phospho-L-threonyl-[protein] + ADP + H(+). In terms of biological role, serine/threonine-protein kinase which regulates the localization and the function of the septins during mitosis. Phosphorylates SHS1. This Saccharomyces cerevisiae (strain ATCC 204508 / S288c) (Baker's yeast) protein is Serine/threonine-protein kinase GIN4 (GIN4).